A 165-amino-acid polypeptide reads, in one-letter code: Nucleotide-binding protein Rcas_1283 (165 aa).

This sequence belongs to the YajQ family.

Its function is as follows. Nucleotide-binding protein. The chain is Nucleotide-binding protein Rcas_1283 from Roseiflexus castenholzii (strain DSM 13941 / HLO8).